Reading from the N-terminus, the 412-residue chain is Putative competence-damage inducible protein (412 aa).

The protein belongs to the CinA family.

The protein is Putative competence-damage inducible protein of Bacillus cereus (strain ATCC 10987 / NRS 248).